A 1382-amino-acid chain; its full sequence is DNA-directed RNA polymerase subunit beta (1382 aa).

It belongs to the RNA polymerase beta chain family. As to quaternary structure, the RNAP catalytic core consists of 2 alpha, 1 beta, 1 beta' and 1 omega subunit. When a sigma factor is associated with the core the holoenzyme is formed, which can initiate transcription.

It carries out the reaction RNA(n) + a ribonucleoside 5'-triphosphate = RNA(n+1) + diphosphate. Its function is as follows. DNA-dependent RNA polymerase catalyzes the transcription of DNA into RNA using the four ribonucleoside triphosphates as substrates. The sequence is that of DNA-directed RNA polymerase subunit beta from Paracoccus denitrificans (strain Pd 1222).